Here is a 265-residue protein sequence, read N- to C-terminus: Type II pantothenate kinase (265 aa).

Residue 6 to 13 (DAGGTLIK) coordinates ATP. The Proton acceptor role is filled by Glu70. ATP is bound by residues Thr99, 121-125 (GGMIQ), Tyr137, and Ser225.

It belongs to the type II pantothenate kinase family. Homodimer.

It localises to the cytoplasm. It carries out the reaction (R)-pantothenate + ATP = (R)-4'-phosphopantothenate + ADP + H(+). The protein operates within cofactor biosynthesis; coenzyme A biosynthesis; CoA from (R)-pantothenate: step 1/5. In terms of biological role, catalyzes the phosphorylation of pantothenate (Pan), the first step in CoA biosynthesis. The protein is Type II pantothenate kinase of Staphylococcus saprophyticus subsp. saprophyticus (strain ATCC 15305 / DSM 20229 / NCIMB 8711 / NCTC 7292 / S-41).